Reading from the N-terminus, the 411-residue chain is Creatinase (411 aa).

His-240 is a catalytic residue.

The protein belongs to the peptidase M24 family. Creatinase subfamily. In terms of assembly, homodimer.

The enzyme catalyses creatine + H2O = sarcosine + urea. This chain is Creatinase, found in Bacillus sp. (strain B-0618).